We begin with the raw amino-acid sequence, 245 residues long: Orotidine 5'-phosphate decarboxylase (245 aa).

Substrate is bound by residues Asp-22, Lys-44, 71-80, Thr-131, Arg-192, Gln-201, Gly-221, and Arg-222; that span reads DLKFHDIPNT. The active-site Proton donor is Lys-73.

Belongs to the OMP decarboxylase family. Type 1 subfamily. Homodimer.

It carries out the reaction orotidine 5'-phosphate + H(+) = UMP + CO2. It functions in the pathway pyrimidine metabolism; UMP biosynthesis via de novo pathway; UMP from orotate: step 2/2. Functionally, catalyzes the decarboxylation of orotidine 5'-monophosphate (OMP) to uridine 5'-monophosphate (UMP). This is Orotidine 5'-phosphate decarboxylase from Salmonella newport (strain SL254).